Here is a 498-residue protein sequence, read N- to C-terminus: Glycerol kinase (498 aa).

Thr11 lines the ADP pocket. The ATP site is built by Thr11, Ser12, and Ser13. Sn-glycerol 3-phosphate is bound at residue Thr11. Arg15 is a binding site for ADP. 4 residues coordinate sn-glycerol 3-phosphate: Arg81, Glu82, Tyr133, and Asp242. 5 residues coordinate glycerol: Arg81, Glu82, Tyr133, Asp242, and Gln243. ADP-binding residues include Thr264 and Gly307. Positions 264, 307, 311, and 412 each coordinate ATP. ADP-binding residues include Gly412 and Asn416.

The protein belongs to the FGGY kinase family.

It carries out the reaction glycerol + ATP = sn-glycerol 3-phosphate + ADP + H(+). It participates in polyol metabolism; glycerol degradation via glycerol kinase pathway; sn-glycerol 3-phosphate from glycerol: step 1/1. With respect to regulation, inhibited by fructose 1,6-bisphosphate (FBP). In terms of biological role, key enzyme in the regulation of glycerol uptake and metabolism. Catalyzes the phosphorylation of glycerol to yield sn-glycerol 3-phosphate. This Delftia acidovorans (strain DSM 14801 / SPH-1) protein is Glycerol kinase.